The chain runs to 440 residues: MTAPFAIRRLNAADPDFGRHLDHLLSWESVSDDSVNQRVLDIIAAVRSRGDAAVVEFTQRFDGLQAASMADLILPRERLELALTRITVAQREALEVAAERVRSYHEKQKQGSWRYTEADGTVLGQQVTPLDRAGLYVPGGKASYPSSVLMNAIPAKVAGVSEVVMVVPTPRGEINEIVLAAACIAGVDRVFTIGGAQAVAALAYGTESVPRVDKIVGPGNIYVATAKRHVFGQVGIDMIAGPSEILVVCDGQTDPDWIAMDLFSQAEHDEDAQSILVSPDAAFLDRVADSIARLLPTMERAEIIRTSLEGRGALIQVADQAQACAVANRIAPEHLELSVADPESWLPEIRHAGAIFMGRYTAEALGDYCAGPNHVLPTSGTARFSSPLGVYDFQKRSSIINCSAEGASVLGRTASVLARGESLTAHARSAEYRILDEKEA.

Residues Y136, Q197, and N220 each contribute to the NAD(+) site. Substrate-binding residues include S243, Q265, and H268. 2 residues coordinate Zn(2+): Q265 and H268. Residues E333 and H334 each act as proton acceptor in the active site. Residues H334, D367, E421, and H426 each coordinate substrate. Residue D367 participates in Zn(2+) binding. H426 contacts Zn(2+).

Belongs to the histidinol dehydrogenase family. Requires Zn(2+) as cofactor.

The catalysed reaction is L-histidinol + 2 NAD(+) + H2O = L-histidine + 2 NADH + 3 H(+). It functions in the pathway amino-acid biosynthesis; L-histidine biosynthesis; L-histidine from 5-phospho-alpha-D-ribose 1-diphosphate: step 9/9. Catalyzes the sequential NAD-dependent oxidations of L-histidinol to L-histidinaldehyde and then to L-histidine. This chain is Histidinol dehydrogenase, found in Pseudomonas aeruginosa (strain ATCC 15692 / DSM 22644 / CIP 104116 / JCM 14847 / LMG 12228 / 1C / PRS 101 / PAO1).